The primary structure comprises 464 residues: Zinc transporter 6 (464 aa).

Topologically, residues Met1–Lys33 are cytoplasmic. The helical transmembrane segment at Ile34–Ser54 threads the bilayer. Over Thr55–Thr64 the chain is Extracellular. The helical transmembrane segment at Tyr65–Met85 threads the bilayer. The Cytoplasmic segment spans residues Lys86–Arg98. The helical transmembrane segment at Phe99 to Leu119 threads the bilayer. At Lys120 to Thr134 the chain is on the extracellular side. A helical membrane pass occupies residues Gly135–Ile155. The Cytoplasmic portion of the chain corresponds to Arg156–Pro200. A helical transmembrane segment spans residues Phe201–Ile221. Topologically, residues Asn222–Asp228 are extracellular. A helical membrane pass occupies residues Thr229–Tyr249. Topologically, residues Ser250–Gln464 are cytoplasmic.

Belongs to the cation diffusion facilitator (CDF) transporter (TC 2.A.4) family. SLC30A subfamily. Heterodimer with SLC30A5; form a functional zinc ion transmembrane transporter.

It localises to the golgi apparatus. The protein resides in the trans-Golgi network membrane. Has probably no intrinsic transporter activity but together with SLC30A5 forms a functional zinc ion:proton antiporter heterodimer, mediating zinc entry into the lumen of organelles along the secretory pathway. As part of that zinc ion:proton antiporter, contributes to zinc ion homeostasis within the early secretory pathway and regulates the activation and folding of enzymes like alkaline phosphatases and enzymes involved in phosphatidylinositol glycan anchor biosynthesis. The protein is Zinc transporter 6 (slc30a6) of Xenopus tropicalis (Western clawed frog).